Here is a 51-residue protein sequence, read N- to C-terminus: ATP synthase F(1) complex subunit epsilon, mitochondrial (51 aa).

N6-acetyllysine; alternate occurs at positions 21, 32, and 37. An N6-succinyllysine; alternate mark is found at lysine 21, lysine 32, and lysine 37. The residue at position 44 (lysine 44) is an N6-acetyllysine.

The protein belongs to the eukaryotic ATPase epsilon family. As to quaternary structure, component of the ATP synthase complex composed at least of ATP5F1A/subunit alpha, ATP5F1B/subunit beta, ATP5MC1/subunit c (homooctomer), MT-ATP6/subunit a, MT-ATP8/subunit 8, ATP5ME/subunit e, ATP5MF/subunit f, ATP5MG/subunit g, ATP5MK/subunit k, ATP5MJ/subunit j, ATP5F1C/subunit gamma, ATP5F1D/subunit delta, ATP5F1E/subunit epsilon, ATP5PF/subunit F6, ATP5PB/subunit b, ATP5PD/subunit d, ATP5PO/subunit OSCP. ATP synthase complex consists of a soluble F(1) head domain (subunits alpha(3) and beta(3)) - the catalytic core - and a membrane F(0) domain - the membrane proton channel (subunits c, a, 8, e, f, g, k and j). These two domains are linked by a central stalk (subunits gamma, delta, and epsilon) rotating inside the F1 region and a stationary peripheral stalk (subunits F6, b, d, and OSCP). In terms of tissue distribution, ubiquitous.

Its subcellular location is the mitochondrion. The protein resides in the mitochondrion inner membrane. Subunit epsilon, of the mitochondrial membrane ATP synthase complex (F(1)F(0) ATP synthase or Complex V) that produces ATP from ADP in the presence of a proton gradient across the membrane which is generated by electron transport complexes of the respiratory chain. ATP synthase complex consist of a soluble F(1) head domain - the catalytic core - and a membrane F(1) domain - the membrane proton channel. These two domains are linked by a central stalk rotating inside the F(1) region and a stationary peripheral stalk. During catalysis, ATP synthesis in the catalytic domain of F(1) is coupled via a rotary mechanism of the central stalk subunits to proton translocation. In vivo, can only synthesize ATP although its ATP hydrolase activity can be activated artificially in vitro. May be essential for the assembly of F(1) and may play an important role in the incorporation of the hydrophobic subunit c into the F(1)-c oligomer rotor of the mitochondrial ATP synthase complex. In Homo sapiens (Human), this protein is ATP synthase F(1) complex subunit epsilon, mitochondrial.